The primary structure comprises 410 residues: Probable protein S-acyltransferase 6 (410 aa).

Transmembrane regions (helical) follow at residues 45 to 65 and 76 to 96; these read LGLTISLIVAPVTIFCIFVAS and GVSIILVAVVFTIYDLILLML. The disordered stretch occupies residues 108–129; sequence NSHPPEPEVVDGNTGSGTSQTP. The region spanning 147–197 is the DHHC domain; the sequence is KYCDTCMLYRPPRCSHCSICNNCVERFDHHCPWVGQCIAQRNYRFFFMFVF. Residue Cys-177 is the S-palmitoyl cysteine intermediate of the active site. 2 helical membrane-spanning segments follow: residues 191 to 211 and 235 to 255; these read FFFMFVFSTTLLCVYVFAFCC and SIALILYTFISTFFVGGLTCF. Position 325 is a phosphoserine (Ser-325).

Belongs to the DHHC palmitoyltransferase family.

The protein localises to the cell membrane. It catalyses the reaction L-cysteinyl-[protein] + hexadecanoyl-CoA = S-hexadecanoyl-L-cysteinyl-[protein] + CoA. In terms of biological role, palmitoyl acyltransferase. The chain is Probable protein S-acyltransferase 6 (PAT06) from Arabidopsis thaliana (Mouse-ear cress).